The following is a 630-amino-acid chain: Adenine DNA glycosylase (630 aa).

Residues 54-72 show a composition bias toward basic and acidic residues; the sequence is MRKCREKKEAEREAEREAE. The disordered stretch occupies residues 54–123; sequence MRKCREKKEA…ALGGDIEDLF (70 aa). Residues 73–123 show a composition bias toward acidic residues; sequence REAEEEEKAEEAEAEADKEEAEEESEEEEEEEEEEAEAEEEALGGDIEDLF. E168 acts as the Proton donor/acceptor in catalysis. Positions 341, 348, 351, and 357 each coordinate [4Fe-4S] cluster. Residues 383-536 enclose the Nudix hydrolase domain; the sequence is PRHDFCCVCV…RKVPPFRLQH (154 aa). The Nudix box motif lies at 427–451; that stretch reads VILNEEADSATRRNAINVYLKEAFR.

This sequence belongs to the Nth/MutY family. The cofactor is [4Fe-4S] cluster.

The protein localises to the nucleus. The enzyme catalyses Hydrolyzes free adenine bases from 7,8-dihydro-8-oxoguanine:adenine mismatched double-stranded DNA, leaving an apurinic site.. Involved in oxidative DNA damage repair. Initiates repair of A*oxoG to C*G by removing the inappropriately paired adenine base from the DNA backbone. Possesses both adenine and 2-OH-A DNA glycosylase activities. The chain is Adenine DNA glycosylase (MYH) from Arabidopsis thaliana (Mouse-ear cress).